Consider the following 381-residue polypeptide: 2-methylcitrate synthase 1 (381 aa).

His192 is a substrate binding site. His227 is a catalytic residue. 260–264 lines the CoA pocket; sequence RIMGF. His266 is a catalytic residue. Substrate is bound at residue Arg275. Asp317 is a catalytic residue. 2 residues coordinate substrate: Arg342 and Arg361.

This sequence belongs to the citrate synthase family. In terms of assembly, homodimer.

The catalysed reaction is propanoyl-CoA + oxaloacetate + H2O = (2S,3S)-2-methylcitrate + CoA + H(+). It carries out the reaction oxaloacetate + acetyl-CoA + H2O = citrate + CoA + H(+). It functions in the pathway carbohydrate metabolism; tricarboxylic acid cycle. In terms of biological role, catalyzes the Claisen condensation of propionyl-CoA and oxaloacetate (OAA) to yield 2-methylcitrate (2-MC) and CoA. Also catalyzes the condensation of oxaloacetate with propionyl-CoA but with a lower specificity. This is 2-methylcitrate synthase 1 (prpC1) from Corynebacterium glutamicum (strain ATCC 13032 / DSM 20300 / JCM 1318 / BCRC 11384 / CCUG 27702 / LMG 3730 / NBRC 12168 / NCIMB 10025 / NRRL B-2784 / 534).